The sequence spans 525 residues: Cyclic AMP-responsive element-binding protein 3-like protein 2 (525 aa).

Topologically, residues 1–382 are cytoplasmic; it reads MEIMESGDPV…SCKAAGTQTG (382 aa). 3 disordered regions span residues 85–104, 203–267, and 309–338; these read LCGD…DDNF, EALQ…QGSG, and NKIS…SSEN. Composition is skewed to polar residues over residues 90 to 102 and 213 to 239; these read RPQS…SSDD and SSHG…QSQA. The bZIP domain occupies 299-362; the sequence is ALKKIRRKIK…RTLLQQLQRL (64 aa). Residues 301-330 form a basic motif region; it reads KKIRRKIKNKISAQESRRKKKEYMDSLEKR. Residues 322–332 are compositionally biased toward basic and acidic residues; it reads EYMDSLEKRVE. The leucine-zipper stretch occupies residues 341–362; it reads LRKKVEVLESTNRTLLQQLQRL. The helical; Signal-anchor for type II membrane protein transmembrane segment at 383–403 threads the bilayer; the sequence is TCLMMVVLCFAVIFGSFTQNL. Residues 404 to 525 lie on the Lumenal side of the membrane; sequence DMYSSSSKTI…ELDRTVNTTS (122 aa). The short motif at 433–436 is the S1P recognition element; the sequence is RKLL. N-linked (GlcNAc...) asparagine glycans are attached at residues N490, N509, and N522.

This sequence belongs to the bZIP family. ATF subfamily. In terms of assembly, binds DNA as a dimer. Upon ER stress, translocated to the Golgi apparatus, where it is processed by regulated intramembrane proteolysis (RIP) to release the cytosol-facing N-terminal transcription factor domain. The cleavage is performed sequentially by site-1 and site-2 proteases (S1P/mbtps1 and S2P/mbtps2).

The protein localises to the endoplasmic reticulum membrane. The protein resides in the nucleus. In terms of biological role, transcription factor involved in unfolded protein response (UPR). In the absence of endoplasmic reticulum (ER) stress, inserted into ER membranes, with N-terminal DNA-binding and transcription activation domains oriented toward the cytosolic face of the membrane. In response to ER stress, transported to the Golgi, where it is cleaved in a site-specific manner by resident proteases S1P/mbtps1 and S2P/mbtps2. The released N-terminal cytosolic domain is translocated to the nucleus to effect transcription of specific target genes. Plays a critical role in chondrogenesis. May protect neuroblastoma cells from ER stress-induced death. In vitro activates transcription of target genes via direct binding to the CRE site. The sequence is that of Cyclic AMP-responsive element-binding protein 3-like protein 2 (creb3l2) from Xenopus laevis (African clawed frog).